Reading from the N-terminus, the 484-residue chain is Replication factor C large subunit (484 aa).

46-53 (GPPGSGKT) provides a ligand contact to ATP. Residues 463–478 (NADTKEKEKKDPKKQA) show a composition bias toward basic and acidic residues. Residues 463 to 484 (NADTKEKEKKDPKKQATLDSFF) form a disordered region.

It belongs to the activator 1 small subunits family. RfcL subfamily. In terms of assembly, heteromultimer composed of small subunits (RfcS) and large subunits (RfcL).

Part of the RFC clamp loader complex which loads the PCNA sliding clamp onto DNA. The chain is Replication factor C large subunit from Methanococcus maripaludis (strain C6 / ATCC BAA-1332).